Consider the following 114-residue polypeptide: Large ribosomal subunit protein bL20 (114 aa).

Belongs to the bacterial ribosomal protein bL20 family.

Functionally, binds directly to 23S ribosomal RNA and is necessary for the in vitro assembly process of the 50S ribosomal subunit. It is not involved in the protein synthesizing functions of that subunit. This is Large ribosomal subunit protein bL20 from Anaeromyxobacter dehalogenans (strain 2CP-C).